A 181-amino-acid chain; its full sequence is MNGFSTEEDSRDGPPAQAAPFFGQTCCLIDGGERCPRPAGNASFSKRVQKSISQKKLKLDIDKSVRHLYICDFHKNYIQSVRNKRKRKTSDDGGDSPEHETDVPEVDLFQLQVNTLRRYKRYYKLQTRPGLNKAQLAETVSRHFRNIPVNEKETLAYFIYMVKSNRSRLDQKSESSKQLEA.

An Atypical zinc finger spans residues 26-74 (CCLIDGGERCPRPAGNASFSKRVQKSISQKKLKLDIDKSVRHLYICDFH). The disordered stretch occupies residues 82–103 (RNKRKRKTSDDGGDSPEHETDV). The short motif at 83–88 (NKRKRK) is the Nuclear localization signal (NLS) element. Residues 85-87 (RKR) form an important for DNA and phosphoinositide binding region.

The protein belongs to the SAP30 family. As to quaternary structure, interacts with components of the histone deacetylase complex sin3a, hdac1 and hdac2. Binds histones and nucleosomes.

The protein localises to the nucleus. It is found in the nucleolus. Functions as a transcription repressor, probably via its interaction with histone deacetylase complexes. Involved in the functional recruitment of the class 1 Sin3-histone deacetylase complex (HDAC) to the nucleolus. Binds DNA, apparently without sequence-specificity, and bends bound double-stranded DNA. Binds phosphoinositol phosphates (phosphoinositol 3-phosphate, phosphoinositol 4-phosphate and phosphoinositol 5-phosphate) via the same basic sequence motif that mediates DNA binding and nuclear import. The protein is Histone deacetylase complex subunit SAP30L (sap30l) of Xenopus tropicalis (Western clawed frog).